Here is a 256-residue protein sequence, read N- to C-terminus: uncharacterized protein (256 aa).

Transmembrane regions (helical) follow at residues Thr6–Leu26, Leu29–Ile49, Ile61–Phe81, Ile145–Ala165, Tyr175–Ile195, and Ile218–Phe238.

Belongs to the DedA family.

The protein localises to the cell membrane. This is an uncharacterized protein from Buchnera aphidicola subsp. Acyrthosiphon pisum (strain APS) (Acyrthosiphon pisum symbiotic bacterium).